The primary structure comprises 454 residues: DNA primase small subunit (454 aa).

Active-site residues include E66, D131, and D133. Mg(2+) contacts are provided by D131 and D133. Mn(2+) is bound by residues D131 and D133. 131 to 133 contacts a ribonucleoside 5'-triphosphate; the sequence is DID. Positions 143, 144, 150, and 153 each coordinate Zn(2+). A Zinc knuckle motif motif is present at residues 143–153; the sequence is CCSKTNICEKC. 182–188 provides a ligand contact to a ribonucleoside 5'-triphosphate; sequence SGRRGIH. D333 lines the Mg(2+) pocket. Position 333 (D333) interacts with Mn(2+). 342–345 contributes to the a ribonucleoside 5'-triphosphate binding site; it reads HLLK. A disordered region spans residues 385-420; that stretch reads DKNSQNDNGHGPTMETNTTENQKDNARGQSNKGHGF. Composition is skewed to polar residues over residues 389-404 and 411-420; these read QNDNGHGPTMETNTTE and RGQSNKGHGF.

This sequence belongs to the eukaryotic-type primase small subunit family. In terms of assembly, heterodimer of a catalytic subunit spp1/pri1 and a regulatory subunit spp2/pri2, also known as the DNA primase complex. Component of the alpha DNA polymerase complex (also known as the alpha DNA polymerase-primase complex) consisting of four subunits: the catalytic subunit pol1, the accessory subunit spb70/pol12, and the primase complex subunits spp1/pri1 and spp2/pri2 respectively. Mg(2+) is required as a cofactor. The cofactor is Mn(2+).

The protein resides in the nucleus. The catalysed reaction is ssDNA + n NTP = ssDNA/pppN(pN)n-1 hybrid + (n-1) diphosphate.. In terms of biological role, catalytic subunit of the DNA primase complex and component of the DNA polymerase alpha complex (also known as the alpha DNA polymerase-primase complex - primosome/replisome) which play an essential role in the initiation of DNA synthesis. During the S phase of the cell cycle, the DNA polymerase alpha complex (composed of a catalytic subunit pol1, an accessory subunit spb70/pol12 and two primase subunits, the catalytic subunit spp1/pri1 and the regulatory subunit spp2/pri2) is recruited to DNA at the replicative forks. The primase subunit of the polymerase alpha complex initiates DNA synthesis by oligomerising short RNA primers on both leading and lagging strands. In Schizosaccharomyces pombe (strain 972 / ATCC 24843) (Fission yeast), this protein is DNA primase small subunit.